A 256-amino-acid chain; its full sequence is 7-cyano-7-deazaguanine synthase (256 aa).

Residues 1–22 (MTDASADALTSPSNSGASQDTS) are disordered. Polar residues predominate over residues 8–22 (ALTSPSNSGASQDTS). An ATP-binding site is contributed by 30–40 (LSGGLDSVTCL). Zn(2+) contacts are provided by Cys220, Cys230, Cys233, and Cys236.

The protein belongs to the QueC family. Zn(2+) is required as a cofactor.

The enzyme catalyses 7-carboxy-7-deazaguanine + NH4(+) + ATP = 7-cyano-7-deazaguanine + ADP + phosphate + H2O + H(+). The protein operates within purine metabolism; 7-cyano-7-deazaguanine biosynthesis. In terms of biological role, catalyzes the ATP-dependent conversion of 7-carboxy-7-deazaguanine (CDG) to 7-cyano-7-deazaguanine (preQ(0)). The chain is 7-cyano-7-deazaguanine synthase from Psychrobacter sp. (strain PRwf-1).